The following is a 332-amino-acid chain: Long form salivary protein D7L1 (332 aa).

Residues 1 to 21 (MHSPKSFLLLAVVFVALRVTA) form the signal peptide. Cystine bridges form between Cys40/Cys77 and Cys73/Cys133. Trp61 is a binding site for leukotriene E4. A leukotriene E4-binding site is contributed by Lys176. Intrachain disulfides connect Cys184-Cys219, Cys200-Cys331, and Cys259-Cys278. The noradrenaline site is built by Glu185 and Arg203. 2 residues coordinate noradrenaline: Asp294 and Glu297.

Belongs to the PBP/GOBP family. Female mosquito salivary gland (at protein level).

Its subcellular location is the secreted. Modulates blood feeding of female mosquitoes on vertebrate species by binding and sequestering different mediators involved in the host response, such as biogenic amines and eicosanoids. Binds dopamine, serotonin, histamine, tryptamine, adrenaline, noradrenaline, leukotriene B4, leukotriene C4, leukotriene D4, leukotriene E4 and U-46619, a stable analog of thromboxane A2. Inhibits platelet aggregation induced by serotonin and low doses of thromboxane A2 analog U-46619 but not by high doses of U-46619, collagen or ADP. Prevents leukocyte recruitment. In Aedes albopictus (Asian tiger mosquito), this protein is Long form salivary protein D7L1.